The following is a 952-amino-acid chain: Bromodomain testis-specific protein (952 aa).

Residues 26–132 (RLTNQLQFLQ…KLFMQKLSQM (107 aa)) enclose the Bromo 1 domain. A compositionally biased stretch (basic and acidic residues) spans 141 to 150 (GKERMKKDIQ). A disordered region spans residues 141-168 (GKERMKKDIQQKTAVSSAKEQTPSKSAE). Residues 151-167 (QKTAVSSAKEQTPSKSA) are compositionally biased toward polar residues. Serine 186 is subject to Phosphoserine. The Nuclear localization signal signature appears at 208–219 (KGVKRRADTTTP). The disordered stretch occupies residues 209-257 (GVKRRADTTTPTTSSAKASSESPPPLREAKPANAPVKENTVKSVLPDSQ). The segment covering 216–229 (TTTPTTSSAKASSE) has biased composition (low complexity). The 110-residue stretch at 266–375 (VKVTEQLKHC…DVFEMHFAKI (110 aa)) folds into the Bromo 2 domain. Disordered regions lie at residues 392 to 420 (SAKA…ERVQ), 442 to 504 (VPLR…NAKP), 607 to 746 (QLNC…GCQV), and 850 to 930 (KHLE…RREA). A coiled-coil region spans residues 417–442 (ERVQRLAKLQEQLNAVHQQLQVLSQV). Positions 445 to 463 (RKLKKKNEKSKRAPKRKKV) are enriched in basic residues. Residues 495-577 (KLEEEDNAKP…ACLRKRSLKP (83 aa)) form the NET domain. The segment covering 610–619 (CRKRQTKRPA) has biased composition (basic residues). Pro residues predominate over residues 625–638 (PRPPLPPPPPPPPE). Residues 646–681 (SDSSSSSSSSGSGSSSSSSSSSGSGSSSSDSSSSDS) are compositionally biased toward low complexity. Over residues 718–729 (SAETALVQQSTG) the composition is skewed to polar residues. Positions 837 to 936 (EKEVKARTQE…RREAMAGTID (100 aa)) form a coiled coil. A compositionally biased stretch (basic and acidic residues) spans 850–867 (KHLEHSAKDPKVSQESQR). Over residues 874 to 883 (TPESSSNKVQ) the composition is skewed to polar residues. Positions 893–902 (EQQQLPSPSE) are enriched in low complexity. The span at 911–930 (LLKDRNLAREKEQERRRREA) shows a compositional bias: basic and acidic residues.

The protein belongs to the BET family. Interacts with the acetylated N-terminus of histone H1, H2, H3 and H4. Interacts with P-TEFb components CDK9 and CCNT1/cyclin-T1. Interacts with mRNA splicing machinery proteins SRSF2, DDX5, HNRNPK and TARDBP. Interacts with SMARCE1. In terms of processing, ubiquitinated in a SPOP-dependent manner, leading to proteasomal degradation.

Its subcellular location is the nucleus. In terms of biological role, testis-specific chromatin protein that specifically binds histone H4 acetylated at 'Lys-5' and 'Lys-8' (H4K5ac and H4K8ac, respectively) and plays a key role in spermatogenesis. Required in late pachytene spermatocytes: plays a role in meiotic and post-meiotic cells by binding to acetylated histones at the promoter of specific meiotic and post-meiotic genes, facilitating their activation at the appropriate time. In the post-meiotic phase of spermatogenesis, binds to hyperacetylated histones and participates in their general removal from DNA. Also recognizes and binds a subset of butyrylated histones: able to bind histone H4 butyrylated at 'Lys-8' (H4K8ac), while it is not able to bind H4 butyrylated at 'Lys-5' (H4K5ac). Also acts as a component of the splicing machinery in pachytene spermatocytes and round spermatids and participates in 3'-UTR truncation of specific mRNAs in post-meiotic spermatids. Required for chromocenter organization, a structure comprised of peri-centromeric heterochromatin. The sequence is that of Bromodomain testis-specific protein (Brdt) from Rattus norvegicus (Rat).